The sequence spans 93 residues: DNA-directed RNA polymerase subunit Rpo11 (93 aa).

It belongs to the archaeal Rpo11/eukaryotic RPB11/RPC19 RNA polymerase subunit family. In terms of assembly, part of the RNA polymerase complex.

Its subcellular location is the cytoplasm. The catalysed reaction is RNA(n) + a ribonucleoside 5'-triphosphate = RNA(n+1) + diphosphate. In terms of biological role, DNA-dependent RNA polymerase (RNAP) catalyzes the transcription of DNA into RNA using the four ribonucleoside triphosphates as substrates. This chain is DNA-directed RNA polymerase subunit Rpo11, found in Sulfurisphaera tokodaii (strain DSM 16993 / JCM 10545 / NBRC 100140 / 7) (Sulfolobus tokodaii).